Reading from the N-terminus, the 185-residue chain is Threonylcarbamoyl-AMP synthase (185 aa).

The region spanning 4 to 185 (SWRVQQAAQD…IATGQVMRAG (182 aa)) is the YrdC-like domain.

It belongs to the SUA5 family. TsaC subfamily.

The protein resides in the cytoplasm. It catalyses the reaction L-threonine + hydrogencarbonate + ATP = L-threonylcarbamoyladenylate + diphosphate + H2O. In terms of biological role, required for the formation of a threonylcarbamoyl group on adenosine at position 37 (t(6)A37) in tRNAs that read codons beginning with adenine. Catalyzes the conversion of L-threonine, HCO(3)(-)/CO(2) and ATP to give threonylcarbamoyl-AMP (TC-AMP) as the acyladenylate intermediate, with the release of diphosphate. This Pseudomonas savastanoi pv. phaseolicola (strain 1448A / Race 6) (Pseudomonas syringae pv. phaseolicola (strain 1448A / Race 6)) protein is Threonylcarbamoyl-AMP synthase.